Consider the following 279-residue polypeptide: Large ribosomal subunit protein uL2 (279 aa).

The segment at 202–279 is disordered; sequence NASIGKAGRS…TSRHKSKKKG (78 aa). A compositionally biased stretch (basic residues) spans 209 to 220; that stretch reads GRSRWLGRRPHN.

The protein belongs to the universal ribosomal protein uL2 family. In terms of assembly, part of the 50S ribosomal subunit. Forms a bridge to the 30S subunit in the 70S ribosome.

Functionally, one of the primary rRNA binding proteins. Required for association of the 30S and 50S subunits to form the 70S ribosome, for tRNA binding and peptide bond formation. It has been suggested to have peptidyltransferase activity; this is somewhat controversial. Makes several contacts with the 16S rRNA in the 70S ribosome. This Methylocella silvestris (strain DSM 15510 / CIP 108128 / LMG 27833 / NCIMB 13906 / BL2) protein is Large ribosomal subunit protein uL2.